Reading from the N-terminus, the 695-residue chain is Follicle-stimulating hormone receptor (695 aa).

The first 17 residues, 1 to 17 (MSLLLVSLLAFLTLGSG), serve as a signal peptide directing secretion. 2 disulfide bridges follow: cysteine 18–cysteine 25 and cysteine 23–cysteine 32. One can recognise an LRRNT domain in the interval 18-46 (CHHRICHCSNGVFLCQESKVTEIPPDLPR). Residues 18–366 (CHHRICHCSN…EDIMGHDILR (349 aa)) are Extracellular-facing. 9 LRR repeats span residues 49-72 (VELR…FGDL), 73-97 (EKIE…LPKL), 98-118 (HEIR…AFQN), 119-143 (LPNL…KIQS), 144-169 (LQKV…VGLS), 170-192 (FESM…AFNG), 193-216 (TQLD…VFQG), 217-240 (ASGP…GLEN), and 241-259 (LKKL…PSLE). 2 N-linked (GlcNAc...) asparagine glycosylation sites follow: asparagine 191 and asparagine 199. Disulfide bonds link cysteine 275–cysteine 346, cysteine 276–cysteine 292, cysteine 276–cysteine 356, and cysteine 292–cysteine 338. Asparagine 293 carries an N-linked (GlcNAc...) asparagine glycan. Tyrosine 335 is modified (sulfotyrosine). The chain crosses the membrane as a helical span at residues 367–387 (VLIWFISILAITGNIIVLVIL). The Cytoplasmic portion of the chain corresponds to 388-398 (ITSQYKLTVPR). Residues 399–421 (FLMCNLAFADLCIGIYLLLIASV) traverse the membrane as a helical segment. Topologically, residues 422-443 (DIHTKTQYHNYAIDWQTGAGCD) are extracellular. A disulfide bond links cysteine 442 and cysteine 517. A helical transmembrane segment spans residues 444 to 465 (AAGFFTVFASELSVYTLTAITL). The Cytoplasmic segment spans residues 466–485 (ERWHTITHAMQLQCKVQLRH). Residues 486–508 (AASIMLVGWIFAFTVALFPIFGI) form a helical membrane-spanning segment. The Extracellular segment spans residues 509–528 (SSYMKVSICLPMDIDSPLSQ). The chain crosses the membrane as a helical span at residues 529-550 (LYVVSLLVLNVLAFVVICGCYT). Topologically, residues 551–573 (HIYLTVRNPNIMSSSSDTKIAKR) are cytoplasmic. The chain crosses the membrane as a helical span at residues 574 to 597 (MAMLIFTDFLCMAPISFFAISASL). Residues 598–608 (KVPLITVSKSK) are Extracellular-facing. The chain crosses the membrane as a helical span at residues 609–630 (ILLVLFYPINSCANPFLYAIFT). The Cytoplasmic portion of the chain corresponds to 631–695 (KNFRRDVFIL…LIPLSRLAQN (65 aa)).

The protein belongs to the G-protein coupled receptor 1 family. FSH/LSH/TSH subfamily. In terms of assembly, homotrimer. Functions as a homotrimer binding the FSH hormone heterodimer composed of CGA and FSHB. Interacts with ARRB2. Interacts with APPL2; interaction is independent of follicle stimulating hormone stimulation. N-glycosylated; indirectly required for FSH-binding, possibly via a conformational change that allows high affinity binding of hormone. In terms of processing, sulfated.

The protein resides in the cell membrane. Functionally, g protein-coupled receptor for follitropin, the follicle-stimulating hormone. Through cAMP production activates the downstream PI3K-AKT and ERK1/ERK2 signaling pathways. The sequence is that of Follicle-stimulating hormone receptor (FSHR) from Sus scrofa (Pig).